Consider the following 123-residue polypeptide: Small ribosomal subunit protein uS12 (123 aa).

A 3-methylthioaspartic acid modification is found at Asp-89.

It belongs to the universal ribosomal protein uS12 family. In terms of assembly, part of the 30S ribosomal subunit. Contacts proteins S8 and S17. May interact with IF1 in the 30S initiation complex.

Its function is as follows. With S4 and S5 plays an important role in translational accuracy. Interacts with and stabilizes bases of the 16S rRNA that are involved in tRNA selection in the A site and with the mRNA backbone. Located at the interface of the 30S and 50S subunits, it traverses the body of the 30S subunit contacting proteins on the other side and probably holding the rRNA structure together. The combined cluster of proteins S8, S12 and S17 appears to hold together the shoulder and platform of the 30S subunit. The chain is Small ribosomal subunit protein uS12 from Afipia carboxidovorans (strain ATCC 49405 / DSM 1227 / KCTC 32145 / OM5) (Oligotropha carboxidovorans).